A 439-amino-acid chain; its full sequence is Glutamate-1-semialdehyde 2,1-aminomutase (439 aa).

An N6-(pyridoxal phosphate)lysine modification is found at Lys270.

This sequence belongs to the class-III pyridoxal-phosphate-dependent aminotransferase family. HemL subfamily. In terms of assembly, homodimer. It depends on pyridoxal 5'-phosphate as a cofactor.

Its subcellular location is the cytoplasm. It carries out the reaction (S)-4-amino-5-oxopentanoate = 5-aminolevulinate. It participates in porphyrin-containing compound metabolism; protoporphyrin-IX biosynthesis; 5-aminolevulinate from L-glutamyl-tRNA(Glu): step 2/2. The sequence is that of Glutamate-1-semialdehyde 2,1-aminomutase from Kocuria rhizophila (strain ATCC 9341 / DSM 348 / NBRC 103217 / DC2201).